The following is a 155-amino-acid chain: Small ribosomal subunit protein uS7 (155 aa).

The protein belongs to the universal ribosomal protein uS7 family. In terms of assembly, part of the 30S ribosomal subunit. Contacts proteins S9 and S11.

Functionally, one of the primary rRNA binding proteins, it binds directly to 16S rRNA where it nucleates assembly of the head domain of the 30S subunit. Is located at the subunit interface close to the decoding center, probably blocks exit of the E-site tRNA. This Chloroherpeton thalassium (strain ATCC 35110 / GB-78) protein is Small ribosomal subunit protein uS7.